We begin with the raw amino-acid sequence, 621 residues long: MSARRVTLNTRVSRASTSTPVGGASTSSRVGATSPTSPTRTSRQQEKEELQHLNDRLACYIDRMRNLENENSRLTQELNLAQDTVNRETSNLKAVYEKELAAARKLLDETAKEKAKLEIDIKRLWEENDDLKPRLDKKTKEATVAENNARLYENRYNEVNGKYNQSLADRKKFEDQAKELALENERLRRQLDDLRKQLEAETLARVDLENQNQSLREELAFKDQVHTQELTETRSRRQIEISEIDGRLSRQYEAKLQQSLQELRDQYEGQMRINREEIELLYDNEIQNLKAAANRAAQGSALATEEVRLMRTKIDGLNAKLQNLEDTNAGLNARIRELENLLDTERQRHNQYIASLEAELQRMRDEMAHQLQEYQGLMDIKVSLDLEIAAYDKLLCGEERRLNIESPGRPTTDSGISSNGSHLTASASSRSGRVTPSGRRSATPGISGSSAVKRRRTVIDESEDRTLSEYSVNAAAKGDLEIIEADVEGRFIKLHNKGTEEINLTGWQLTRIAGDEELAFKFSRGSKVLGGASVTIWSVDAGTAHDPPNNLVMKKKWPVANSMRSVLANADKEDVASYDRVRANVSSHTSRHRSSGTPSTGFTLGSGAGSTGVRSLFSLLF.

The segment at 1–47 (MSARRVTLNTRVSRASTSTPVGGASTSSRVGATSPTSPTRTSRQQEK) is disordered. Residues 1 to 47 (MSARRVTLNTRVSRASTSTPVGGASTSSRVGATSPTSPTRTSRQQEK) are head. Residues 7-31 (TLNTRVSRASTSTPVGGASTSSRVG) show a composition bias toward polar residues. The span at 33–42 (TSPTSPTRTS) shows a compositional bias: low complexity. S34 carries the post-translational modification Phosphoserine. Residues 46–402 (EKEELQHLND…KLLCGEERRL (357 aa)) enclose the IF rod domain. The segment at 47–85 (KEELQHLNDRLACYIDRMRNLENENSRLTQELNLAQDTV) is coil 1A. The interval 86–95 (NRETSNLKAV) is linker 1. Residues 96–233 (YEKELAAARK…QVHTQELTET (138 aa)) are coil 1B. Positions 234-257 (RSRRQIEISEIDGRLSRQYEAKLQ) are linker 2. A coil 2 region spans residues 258 to 403 (QSLQELRDQY…LLCGEERRLN (146 aa)). Residues 404–458 (IESPGRPTTDSGISSNGSHLTASASSRSGRVTPSGRRSATPGISGSSAVKRRRTV) are disordered. Positions 404-621 (IESPGRPTTD…GVRSLFSLLF (218 aa)) are tail. Residues S406 and S441 each carry the phosphoserine modification. The span at 409–450 (RPTTDSGISSNGSHLTASASSRSGRVTPSGRRSATPGISGSS) shows a compositional bias: polar residues. T443 is subject to Phosphothreonine. Residues 453–458 (KRRRTV) carry the Nuclear localization signal motif. Positions 468-582 (SEYSVNAAAK…EDVASYDRVR (115 aa)) constitute an LTD domain. A disordered region spans residues 585–605 (VSSHTSRHRSSGTPSTGFTLG).

The protein belongs to the intermediate filament family. Interacts with MAN1. In terms of tissue distribution, first detected from late stage 12 in the oenocytes, abdominal segments, hindgut and posterior spiracles, with expression increasing in stage 13 (at protein level). In stage 14, also becomes detectable in the foregut (at protein level). Stage 15 shows expression in the epidermis, dorsal longitudinal trunk, pharynx, esophagus and proventriculus, with the dorsal pharyngeal musculature showing expression in late stage 15 (at protein level). In stage 16 embryos, also detected in the exit glia with increasing expression in the somatic musculature (at protein level). Also detected in the visceral mesoderm but not in the midgut or central nervous system until the end of embryogenesis (at protein level). In third instar larvae, detectable at varying levels in all cell types (at protein level). Expressed in spermatocytes (at protein level).

It localises to the nucleus. Its subcellular location is the nucleus lamina. Functionally, lamins are components of the nuclear lamina, a fibrous layer on the nucleoplasmic side of the inner nuclear membrane, which is thought to provide a framework for the nuclear envelope and may also interact with chromatin. In spermatocytes, regulates cytokinesis during meiosis. This is Lamin-C (LamC) from Drosophila melanogaster (Fruit fly).